Consider the following 220-residue polypeptide: NADH-quinone oxidoreductase subunit I (220 aa).

4Fe-4S ferredoxin-type domains are found at residues 71-102 (LQRL…IITH) and 112-141 (DSYT…MGNR). [4Fe-4S] cluster-binding residues include cysteine 82, cysteine 85, cysteine 88, cysteine 92, cysteine 121, cysteine 124, cysteine 127, and cysteine 131. A disordered region spans residues 187 to 220 (MQATPLDYVQEPSKEESQEETPTNPESNKGDENV).

It belongs to the complex I 23 kDa subunit family. In terms of assembly, NDH-1 is composed of 14 different subunits. Subunits NuoA, H, J, K, L, M, N constitute the membrane sector of the complex. It depends on [4Fe-4S] cluster as a cofactor.

It localises to the cell inner membrane. It carries out the reaction a quinone + NADH + 5 H(+)(in) = a quinol + NAD(+) + 4 H(+)(out). Its function is as follows. NDH-1 shuttles electrons from NADH, via FMN and iron-sulfur (Fe-S) centers, to quinones in the respiratory chain. The immediate electron acceptor for the enzyme in this species is believed to be ubiquinone. Couples the redox reaction to proton translocation (for every two electrons transferred, four hydrogen ions are translocated across the cytoplasmic membrane), and thus conserves the redox energy in a proton gradient. This is NADH-quinone oxidoreductase subunit I from Helicobacter pylori (strain ATCC 700392 / 26695) (Campylobacter pylori).